We begin with the raw amino-acid sequence, 357 residues long: Histidinol-phosphate aminotransferase (357 aa).

Position 212 is an N6-(pyridoxal phosphate)lysine (Lys-212).

Belongs to the class-II pyridoxal-phosphate-dependent aminotransferase family. Histidinol-phosphate aminotransferase subfamily. In terms of assembly, homodimer. It depends on pyridoxal 5'-phosphate as a cofactor.

It carries out the reaction L-histidinol phosphate + 2-oxoglutarate = 3-(imidazol-4-yl)-2-oxopropyl phosphate + L-glutamate. The protein operates within amino-acid biosynthesis; L-histidine biosynthesis; L-histidine from 5-phospho-alpha-D-ribose 1-diphosphate: step 7/9. In Pectobacterium atrosepticum (strain SCRI 1043 / ATCC BAA-672) (Erwinia carotovora subsp. atroseptica), this protein is Histidinol-phosphate aminotransferase.